Reading from the N-terminus, the 368-residue chain is MEEILIWIKKLEKYLYALNAKVAGIPLYKIIIASAIMLFTLILRRLIAFLIVKILTKLTIRTKTDVDELIVKAFVKPFSYFIVVFGFYLSLLVLEVPKVYADKFLKTFSLLILGWAIIRFLNLFHNKIVEFFVKVGGKDFAEEVGDFILKILKAFVVVIVGASLLQEWGVNIGAILASVGLLGLAVSLAAKDTFENILSGLIILLDKPVKVGETVKVKDFMGSVEDIGLRSTKIRTFDKSLVTIPNRDIVNNHVENFTRRNKRRVRFYIGVVYSTKREQLENILKEIRELLKEHPGVAKDEKFYVYFENYGDSSLNILIQYYANTNDYEEYLKIIEDINLKIMEIVEKNGSSFAFPSRSVYIEKMPKS.

A run of 5 helical transmembrane segments spans residues 22 to 42, 74 to 94, 104 to 124, 144 to 164, and 168 to 188; these read VAGIPLYKIIIASAIMLFTLI, FVKPFSYFIVVFGFYLSLLVL, FLKTFSLLILGWAIIRFLNLF, VGDFILKILKAFVVVIVGASL, and WGVNIGAILASVGLLGLAVSL.

This sequence belongs to the MscS (TC 1.A.23) family.

It localises to the cell membrane. This is an uncharacterized protein from Aquifex aeolicus (strain VF5).